A 1067-amino-acid chain; its full sequence is DNA-directed RNA polymerase subunit beta (1067 aa).

Belongs to the RNA polymerase beta chain family. As to quaternary structure, in plastids the minimal PEP RNA polymerase catalytic core is composed of four subunits: alpha, beta, beta', and beta''. When a (nuclear-encoded) sigma factor is associated with the core the holoenzyme is formed, which can initiate transcription.

The protein localises to the plastid. It is found in the chloroplast. It catalyses the reaction RNA(n) + a ribonucleoside 5'-triphosphate = RNA(n+1) + diphosphate. Its function is as follows. DNA-dependent RNA polymerase catalyzes the transcription of DNA into RNA using the four ribonucleoside triphosphates as substrates. This is DNA-directed RNA polymerase subunit beta from Ipomoea purpurea (Common morning glory).